The primary structure comprises 90 residues: MNLIDRQQALALGRGLRLDWEPRKACHVLLYAGGIIELNASAGWVLELLDGHSTVATVIDRLAQRFPNVPGLEEDVLAFLEVARAKSWIE.

It belongs to the PqqD family. Monomer. Interacts with PqqE.

It participates in cofactor biosynthesis; pyrroloquinoline quinone biosynthesis. Functionally, functions as a PqqA binding protein and presents PqqA to PqqE, in the pyrroloquinoline quinone (PQQ) biosynthetic pathway. The polypeptide is PqqA binding protein 2 (pqqD2) (Pseudomonas putida (strain ATCC 47054 / DSM 6125 / CFBP 8728 / NCIMB 11950 / KT2440)).